The following is a 393-amino-acid chain: Elongation factor Tu (393 aa).

Residues 10–203 (KPHVNIGTIG…AVDEFIPEPL (194 aa)) form the tr-type G domain. Residues 19 to 26 (GHVDHGKT) are G1. Position 19–26 (19–26 (GHVDHGKT)) interacts with GTP. Threonine 26 is a binding site for Mg(2+). The interval 60 to 64 (GITIS) is G2. The segment at 81–84 (DCPG) is G3. Residues 81–85 (DCPGH) and 136–139 (NKVD) contribute to the GTP site. The segment at 136–139 (NKVD) is G4. Residues 173-175 (SAL) form a G5 region.

Belongs to the TRAFAC class translation factor GTPase superfamily. Classic translation factor GTPase family. EF-Tu/EF-1A subfamily. Monomer.

Its subcellular location is the cytoplasm. The enzyme catalyses GTP + H2O = GDP + phosphate + H(+). Its function is as follows. GTP hydrolase that promotes the GTP-dependent binding of aminoacyl-tRNA to the A-site of ribosomes during protein biosynthesis. This chain is Elongation factor Tu, found in Chlorobium phaeobacteroides (strain DSM 266 / SMG 266 / 2430).